The primary structure comprises 1465 residues: DNA polymerase III PolC-type (1465 aa).

An Exonuclease domain is found at 427–583 (YVVFDVETTG…YDAEATGRLL (157 aa)).

This sequence belongs to the DNA polymerase type-C family. PolC subfamily.

The protein resides in the cytoplasm. The catalysed reaction is DNA(n) + a 2'-deoxyribonucleoside 5'-triphosphate = DNA(n+1) + diphosphate. In terms of biological role, required for replicative DNA synthesis. This DNA polymerase also exhibits 3' to 5' exonuclease activity. The polypeptide is DNA polymerase III PolC-type (Streptococcus pyogenes serotype M18 (strain MGAS8232)).